A 380-amino-acid polypeptide reads, in one-letter code: Ribosomal RNA large subunit methyltransferase G (380 aa).

It belongs to the methyltransferase superfamily. RlmG family.

The protein localises to the cytoplasm. The catalysed reaction is guanosine(1835) in 23S rRNA + S-adenosyl-L-methionine = N(2)-methylguanosine(1835) in 23S rRNA + S-adenosyl-L-homocysteine + H(+). Specifically methylates the guanine in position 1835 (m2G1835) of 23S rRNA. The chain is Ribosomal RNA large subunit methyltransferase G from Aeromonas hydrophila subsp. hydrophila (strain ATCC 7966 / DSM 30187 / BCRC 13018 / CCUG 14551 / JCM 1027 / KCTC 2358 / NCIMB 9240 / NCTC 8049).